Reading from the N-terminus, the 262-residue chain is Phosphatidylglycerol--prolipoprotein diacylglyceryl transferase (262 aa).

A run of 4 helical transmembrane segments spans residues 9 to 29 (LGPL…ILAV), 41 to 61 (IIPD…ILGA), 80 to 100 (IFAI…GALV), and 109 to 129 (LINT…AQSL). R131 is a binding site for a 1,2-diacyl-sn-glycero-3-phospho-(1'-sn-glycerol). 3 helical membrane-spanning segments follow: residues 167-187 (QPTF…ILIF), 197-217 (GHIT…IEGM), and 226-246 (GFRV…MIVI).

This sequence belongs to the Lgt family.

It is found in the cell membrane. The catalysed reaction is L-cysteinyl-[prolipoprotein] + a 1,2-diacyl-sn-glycero-3-phospho-(1'-sn-glycerol) = an S-1,2-diacyl-sn-glyceryl-L-cysteinyl-[prolipoprotein] + sn-glycerol 1-phosphate + H(+). It functions in the pathway protein modification; lipoprotein biosynthesis (diacylglyceryl transfer). In terms of biological role, catalyzes the transfer of the diacylglyceryl group from phosphatidylglycerol to the sulfhydryl group of the N-terminal cysteine of a prolipoprotein, the first step in the formation of mature lipoproteins. In Streptococcus pneumoniae serotype 4 (strain ATCC BAA-334 / TIGR4), this protein is Phosphatidylglycerol--prolipoprotein diacylglyceryl transferase.